Consider the following 353-residue polypeptide: Probable protein phosphatase 2C 48 (353 aa).

The PPM-type phosphatase domain occupies 54–348 (FAAVCSRRGE…DDCSAICLFF (295 aa)). Mn(2+) contacts are provided by aspartate 90, glycine 91, aspartate 293, and aspartate 339.

Belongs to the PP2C family. Mg(2+) is required as a cofactor. It depends on Mn(2+) as a cofactor.

The catalysed reaction is O-phospho-L-seryl-[protein] + H2O = L-seryl-[protein] + phosphate. The enzyme catalyses O-phospho-L-threonyl-[protein] + H2O = L-threonyl-[protein] + phosphate. The polypeptide is Probable protein phosphatase 2C 48 (Oryza sativa subsp. japonica (Rice)).